The sequence spans 179 residues: Inner membrane-spanning protein YciB (179 aa).

Transmembrane regions (helical) follow at residues 22–42 (IYAA…YSWV), 50–70 (MALI…FFHN), 76–96 (WKVT…QWVM), 121–141 (LAWA…AFWL), and 149–169 (FKVF…GVYI).

The protein belongs to the YciB family.

The protein localises to the cell inner membrane. Its function is as follows. Plays a role in cell envelope biogenesis, maintenance of cell envelope integrity and membrane homeostasis. The protein is Inner membrane-spanning protein YciB of Salmonella agona (strain SL483).